A 246-amino-acid chain; its full sequence is 14-3-3 protein beta/alpha (246 aa).

Methionine 1 is modified (N-acetylmethionine). An N-acetylthreonine; in 14-3-3 protein beta/alpha, N-terminally processed modification is found at threonine 2. Threonine 2 carries the post-translational modification Phosphothreonine. N6-acetyllysine is present on lysine 5. Lysine 51 is modified (N6-acetyllysine; alternate). A Glycyl lysine isopeptide (Lys-Gly) (interchain with G-Cter in SUMO2); alternate cross-link involves residue lysine 51. Serine 60 bears the Phosphoserine mark. At lysine 70 the chain carries N6-acetyllysine. 3'-nitrotyrosine is present on residues tyrosine 84 and tyrosine 106. Lysine 117 bears the N6-acetyllysine mark. Residues serine 186 and serine 232 each carry the phosphoserine modification.

The protein belongs to the 14-3-3 family. As to quaternary structure, homodimer. Interacts with SAMSN1 and PRKCE. Interacts with AKAP13. Interacts with SSH1 and TORC2/CRTC2. Interacts with ABL1; the interaction results in cytoplasmic location of ABL1 and inhibition of cABL-mediated apoptosis. Interacts with ROR2 (dimer); the interaction results in phosphorylation of YWHAB on tyrosine residues. Interacts with GAB2. Interacts with YAP1 (phosphorylated form). Interacts with the phosphorylated (by AKT1) form of SRPK2. Interacts with PKA-phosphorylated AANAT. Interacts with MYO1C. Interacts with SIRT2. Interacts with the 'Thr-369' phosphorylated form of DAPK2. Interacts with PI4KB, TBC1D22A and TBC1D22B. Interacts with the 'Ser-1134' and 'Ser-1161' phosphorylated form of SOS1. Interacts (via phosphorylated form) with YWHAB; this interaction occurs in a protein kinase AKT1-dependent manner. Interacts with SLITRK1. Interacts with SYNPO2 (phosphorylated form); YWHAB competes with ACTN2 for interaction with SYNPO2. Interacts with RIPOR2 (via phosphorylated form); this interaction occurs in a chemokine-dependent manner and does not compete for binding of RIPOR2 with RHOA nor blocks inhibition of RIPOR2-mediated RHOA activity. Interacts with MARK2 and MARK3. Interacts with TESK1; the interaction is dependent on the phosphorylation of TESK1 'Ser-439' and inhibits TESK1 kinase activity. Interacts with MEFV. Interacts with HDAC4. Interacts with ADAM22 (via C-terminus). The alpha, brain-specific form differs from the beta form in being phosphorylated. Phosphorylated on Ser-60 by protein kinase C delta type catalytic subunit in a sphingosine-dependent fashion. Post-translationally, isoform Short contains a N-acetylmethionine at position 1.

The protein localises to the cytoplasm. The protein resides in the melanosome. Functionally, adapter protein implicated in the regulation of a large spectrum of both general and specialized signaling pathways. Binds to a large number of partners, usually by recognition of a phosphoserine or phosphothreonine motif. Binding generally results in the modulation of the activity of the binding partner. Negative regulator of osteogenesis. Blocks the nuclear translocation of the phosphorylated form (by AKT1) of SRPK2 and antagonizes its stimulatory effect on cyclin D1 expression resulting in blockage of neuronal apoptosis elicited by SRPK2. Negative regulator of signaling cascades that mediate activation of MAP kinases via AKAP13. This Rattus norvegicus (Rat) protein is 14-3-3 protein beta/alpha (Ywhab).